The chain runs to 125 residues: Small ribosomal subunit protein uS12c (125 aa).

This sequence belongs to the universal ribosomal protein uS12 family. In terms of assembly, part of the 30S ribosomal subunit.

The protein resides in the plastid. The protein localises to the chloroplast. In terms of biological role, with S4 and S5 plays an important role in translational accuracy. Located at the interface of the 30S and 50S subunits. This is Small ribosomal subunit protein uS12c (rps12) from Nephroselmis olivacea (Green alga).